Consider the following 275-residue polypeptide: Thymidylate synthase (275 aa).

138–139 is a binding site for dUMP; the sequence is RR. Cys158 serves as the catalytic Nucleophile. Residues 178–181, Asn189, and 219–221 contribute to the dUMP site; these read RSCD and HIY. Asp181 lines the (6R)-5,10-methylene-5,6,7,8-tetrahydrofolate pocket. Ala274 provides a ligand contact to (6R)-5,10-methylene-5,6,7,8-tetrahydrofolate.

This sequence belongs to the thymidylate synthase family. Bacterial-type ThyA subfamily. Homodimer.

The protein localises to the cytoplasm. The enzyme catalyses dUMP + (6R)-5,10-methylene-5,6,7,8-tetrahydrofolate = 7,8-dihydrofolate + dTMP. It participates in pyrimidine metabolism; dTTP biosynthesis. Catalyzes the reductive methylation of 2'-deoxyuridine-5'-monophosphate (dUMP) to 2'-deoxythymidine-5'-monophosphate (dTMP) while utilizing 5,10-methylenetetrahydrofolate (mTHF) as the methyl donor and reductant in the reaction, yielding dihydrofolate (DHF) as a by-product. This enzymatic reaction provides an intracellular de novo source of dTMP, an essential precursor for DNA biosynthesis. The protein is Thymidylate synthase of Fusobacterium nucleatum subsp. nucleatum (strain ATCC 25586 / DSM 15643 / BCRC 10681 / CIP 101130 / JCM 8532 / KCTC 2640 / LMG 13131 / VPI 4355).